The sequence spans 410 residues: Acyl-CoA-binding domain-containing protein 5-B (410 aa).

Residues 12-101 (AQKRFEAAVK…IQLIIETLPV (90 aa)) form the ACB domain. An acyl-CoA is bound by residues 23-32 (IRSLPEDGSY), 43-47 (YSYYK), Lys-69, and Tyr-88. The segment covering 119–128 (VEDDDDDDDE) has biased composition (acidic residues). 3 disordered regions span residues 119 to 165 (VEDD…LDDY), 221 to 242 (SDDE…GSGV), and 254 to 320 (GANM…DRMD). Residues 326 to 355 (TQITTILSELEDNMQDVLRRLTTLEQLTAS) are a coiled coil. The segment at 382–404 (SPFTAVLTVLWPFAVHWLVQFYL) is a transmembrane helix.

It is found in the membrane. Functionally, binds medium- and long-chain acyl-CoA esters. This Danio rerio (Zebrafish) protein is Acyl-CoA-binding domain-containing protein 5-B (acbd5b).